The sequence spans 478 residues: Transcript termination protein A18 (478 aa).

A Helicase ATP-binding domain is found at 98–254; that stretch reads KVELKRPMYV…NDVINVSNSS (157 aa). An ATP-binding site is contributed by 111–118; it reads LACGFGKT. The DESH box motif lies at 204–207; sequence DESH. In terms of domain architecture, Helicase C-terminal spans 307–454; that stretch reads ILDTIIYDFE…IITLAIEKLG (148 aa).

It belongs to the helicase family. Poxviruses subfamily. Interacts with G2. Might be part of a transcription complex composed at least of G2, A18, and H5.

It is found in the virion. Its function is as follows. DNA helicase which seems to act as a postreplicative transcription termination factor. Involved in ATP-dependent release of nascent RNA. Forms a stable complex with single-stranded DNA, and to a lesser extent RNA. In Erythrocebus patas (Red guenon), this protein is Transcript termination protein A18.